A 192-amino-acid chain; its full sequence is Probable GTP-binding protein EngB (192 aa).

The EngB-type G domain maps to 22-192 (SLPEIVFVGR…LLEQLENYTG (171 aa)). Residues 30–37 (GRSNVGKS), 57–61 (GKTQL), 75–78 (DLPG), 142–145 (TKYD), and 172–174 (YSA) each bind GTP. Mg(2+) is bound by residues S37 and T59.

It belongs to the TRAFAC class TrmE-Era-EngA-EngB-Septin-like GTPase superfamily. EngB GTPase family. Requires Mg(2+) as cofactor.

In terms of biological role, necessary for normal cell division and for the maintenance of normal septation. The chain is Probable GTP-binding protein EngB from Prosthecochloris aestuarii (strain DSM 271 / SK 413).